A 474-amino-acid polypeptide reads, in one-letter code: Glutamyl-tRNA(Gln) amidotransferase subunit A (474 aa).

Catalysis depends on charge relay system residues K76 and S151. The active-site Acyl-ester intermediate is the S175.

The protein belongs to the amidase family. GatA subfamily. Heterotrimer of A, B and C subunits.

The enzyme catalyses L-glutamyl-tRNA(Gln) + L-glutamine + ATP + H2O = L-glutaminyl-tRNA(Gln) + L-glutamate + ADP + phosphate + H(+). Functionally, allows the formation of correctly charged Gln-tRNA(Gln) through the transamidation of misacylated Glu-tRNA(Gln) in organisms which lack glutaminyl-tRNA synthetase. The reaction takes place in the presence of glutamine and ATP through an activated gamma-phospho-Glu-tRNA(Gln). The chain is Glutamyl-tRNA(Gln) amidotransferase subunit A from Chlorobium chlorochromatii (strain CaD3).